Here is a 234-residue protein sequence, read N- to C-terminus: UPF0173 metal-dependent hydrolase Msp_0516 (234 aa).

The protein belongs to the UPF0173 family.

This chain is UPF0173 metal-dependent hydrolase Msp_0516, found in Methanosphaera stadtmanae (strain ATCC 43021 / DSM 3091 / JCM 11832 / MCB-3).